A 1128-amino-acid chain; its full sequence is Apoptosis-stimulating of p53 protein 2 (1128 aa).

Disordered stretches follow at residues 86-106 and 322-341; these read PGRD…RNGV and KENL…ASAP. Polar residues predominate over residues 322–339; that stretch reads KENLPVSSDGNLPQQAAS. The interval 332 to 348 is interaction with APPBP1; that stretch reads NLPQQAASAPSRVAAVG. Position 480 is a phosphoserine (Ser-480). Disordered stretches follow at residues 494 to 598 and 655 to 706; these read NVAK…LPPF and NQQQ…LPFL. A compositionally biased stretch (polar residues) spans 528-537; sequence GSSQQLSTVV. Phosphoserine is present on residues Ser-556, Ser-569, Ser-572, and Ser-576. Polar residues predominate over residues 558–575; it reads SIPSVGQDQTLSPGSKQE. Polar residues predominate over residues 655 to 670; sequence NQQQHPENIYSNSQGK. Ser-698, Ser-714, and Ser-737 each carry phosphoserine. 2 disordered regions span residues 724 to 748 and 802 to 909; these read KLSN…NGPN and SLVP…TNLR. Low complexity predominate over residues 840–849; the sequence is NSPNLQNNPE. Positions 866 to 875 match the SH3-binding motif; that stretch reads YPPYPPPPYP. A compositionally biased stretch (pro residues) spans 867 to 876; sequence PPYPPPPYPS. Positions 876–1128 are mediates interaction with APC2; the sequence is SGEPEGPGED…RIKPRQRSLA (253 aa). ANK repeat units lie at residues 926–957, 958–990, 991–1024, and 1025–1067; these read PLAL…LPND, EGIT…AADS, DGWT…MTYS, and DMQT…ALWD. Residues 1057-1119 enclose the SH3 domain; it reads MNKGVIYALW…PRNLLGLYPR (63 aa).

This sequence belongs to the ASPP family. As to quaternary structure, interacts with P53/TP53; the interaction promotes pro-apoptotic activity. Interacts with BCL2. Interacts with protein phosphatase 1. Interacts with RELA NF-kappa-B subunit. This interaction probably prevents the activation of apoptosis, possibly by preventing its interaction with TP53. Interacts with APC2 and NAE1. Interacts with DDX42 (via the C-terminus); the interaction is not inhibited by TP53BP2 ubiquitination and is independent of p53/TP53. As to expression, widely expressed. Expressed in spleen, thymus, prostate, testis, ovary, small intestine, colon and peripheral blood leukocyte. Reduced expression in breast carcinomas expressing a wild-type TP53 protein. Overexpressed in lung cancer cell lines.

It localises to the cytoplasm. The protein resides in the perinuclear region. The protein localises to the nucleus. Regulator that plays a central role in regulation of apoptosis and cell growth via its interactions with proteins such as TP53. Regulates TP53 by enhancing the DNA binding and transactivation function of TP53 on the promoters of proapoptotic genes in vivo. Inhibits the ability of NAE1 to conjugate NEDD8 to CUL1, and thereby decreases NAE1 ability to induce apoptosis. Impedes cell cycle progression at G2/M. Its apoptosis-stimulating activity is inhibited by its interaction with DDX42. This is Apoptosis-stimulating of p53 protein 2 (TP53BP2) from Homo sapiens (Human).